The sequence spans 562 residues: Exonuclease subunit 2 (562 aa).

Position 36–43 (36–43 (GKNGGGKS)) interacts with ATP.

To phage T5 protein D13 and to yeast RAD52. Consists of two subunits: Gp47 and Gp46.

In terms of biological role, exonuclease involved in phage DNA recombination, replication, and repair. This is Exonuclease subunit 2 (46) from Escherichia phage RB69 (Bacteriophage RB69).